A 79-amino-acid polypeptide reads, in one-letter code: Acyl carrier protein (79 aa).

The Carrier domain maps to 2-77 (SDIEERVKKI…SAIDYVNAHK (76 aa)). O-(pantetheine 4'-phosphoryl)serine is present on Ser-37.

The protein belongs to the acyl carrier protein (ACP) family. In terms of processing, 4'-phosphopantetheine is transferred from CoA to a specific serine of apo-ACP by AcpS. This modification is essential for activity because fatty acids are bound in thioester linkage to the sulfhydryl of the prosthetic group.

The protein resides in the cytoplasm. Its pathway is lipid metabolism; fatty acid biosynthesis. Its function is as follows. Carrier of the growing fatty acid chain in fatty acid biosynthesis. The chain is Acyl carrier protein from Pseudoalteromonas atlantica (strain T6c / ATCC BAA-1087).